The chain runs to 258 residues: Hydroxyacylglutathione hydrolase (258 aa).

Residues histidine 55, histidine 57, aspartate 59, histidine 60, histidine 115, aspartate 132, and histidine 170 each coordinate Zn(2+).

The protein belongs to the metallo-beta-lactamase superfamily. Glyoxalase II family. Monomer. Zn(2+) is required as a cofactor.

It catalyses the reaction an S-(2-hydroxyacyl)glutathione + H2O = a 2-hydroxy carboxylate + glutathione + H(+). It functions in the pathway secondary metabolite metabolism; methylglyoxal degradation; (R)-lactate from methylglyoxal: step 2/2. Its function is as follows. Thiolesterase that catalyzes the hydrolysis of S-D-lactoyl-glutathione to form glutathione and D-lactic acid. The sequence is that of Hydroxyacylglutathione hydrolase from Shewanella halifaxensis (strain HAW-EB4).